Consider the following 491-residue polypeptide: UDP-N-acetylmuramoyl-L-alanyl-D-glutamate--2,6-diaminopimelate ligase (491 aa).

Ser-30 provides a ligand contact to UDP-N-acetyl-alpha-D-muramoyl-L-alanyl-D-glutamate. ATP is bound at residue 108–114 (GTNGKTT). UDP-N-acetyl-alpha-D-muramoyl-L-alanyl-D-glutamate-binding positions include Asn-149, 150 to 151 (TT), Ser-177, Gln-183, and Arg-185. Lys-217 is subject to N6-carboxylysine. Meso-2,6-diaminopimelate contacts are provided by residues Arg-383, 407–410 (DNPR), Gly-458, and Glu-462. The short motif at 407-410 (DNPR) is the Meso-diaminopimelate recognition motif element.

This sequence belongs to the MurCDEF family. MurE subfamily. Requires Mg(2+) as cofactor. Post-translationally, carboxylation is probably crucial for Mg(2+) binding and, consequently, for the gamma-phosphate positioning of ATP.

The protein localises to the cytoplasm. It catalyses the reaction UDP-N-acetyl-alpha-D-muramoyl-L-alanyl-D-glutamate + meso-2,6-diaminopimelate + ATP = UDP-N-acetyl-alpha-D-muramoyl-L-alanyl-gamma-D-glutamyl-meso-2,6-diaminopimelate + ADP + phosphate + H(+). It functions in the pathway cell wall biogenesis; peptidoglycan biosynthesis. In terms of biological role, catalyzes the addition of meso-diaminopimelic acid to the nucleotide precursor UDP-N-acetylmuramoyl-L-alanyl-D-glutamate (UMAG) in the biosynthesis of bacterial cell-wall peptidoglycan. In Listeria monocytogenes serotype 4b (strain F2365), this protein is UDP-N-acetylmuramoyl-L-alanyl-D-glutamate--2,6-diaminopimelate ligase.